The sequence spans 272 residues: MAAKVFESIGKFGLALAVAGGVVNSALYNVDAGHRAVIFDRFRGVQDIVVGEGTHFLIPWVQKPIIFDCRSRPRNVPVITGSKDLQNVNITLRILFRPVASQLPRIFTSIGEDYDERVLPSITTEILKSVVARFDAGELITQRELVSRQVSDDLTERAATFGLILDDVSLTHLTFGKEFTEAVEAKQVAQQEAERARFVVEKAEQQKKAAIISAEGDSKAAELIANSLATAGDGLIELRKLEAAEDIAYQLSRSRNITYLPAGQSVLLQLPQ.

N-acetylalanine is present on A2. Residue T91 is modified to Phosphothreonine. 2 positions are modified to N6-acetyllysine: K128 and K186. A coiled-coil region spans residues 177-211 (KEFTEAVEAKQVAQQEAERARFVVEKAEQQKKAAI). K202 carries the N6-acetyllysine; alternate modification. K202 carries the N6-succinyllysine; alternate modification. Y249 carries the post-translational modification Phosphotyrosine.

The protein belongs to the prohibitin family. In terms of assembly, the mitochondrial prohibitin complex consists of two subunits (PHB1 and PHB2), assembled into a membrane-associated ring-shaped supercomplex of approximately 1 mDa. Interacts with STOML2. Interacts with MAP1LC3B (membrane-bound form LC3-II); the interaction requires PHB2 and takes place upon Parkin-mediated mitochondrial damage. Interacts with STAT3 (unphosphorylated or phosphorylated at 'Ser-727'). Interacts with CLPB. Interacts with CD86 (via cytoplasmic domain); the interactions increases after priming with CD40.

The protein resides in the mitochondrion inner membrane. Its subcellular location is the nucleus. It is found in the cytoplasm. It localises to the cell membrane. In terms of biological role, protein with pleiotropic attributes mediated in a cell-compartment- and tissue-specific manner, which include the plasma membrane-associated cell signaling functions, mitochondrial chaperone, and transcriptional co-regulator of transcription factors in the nucleus. Plays a role in adipose tissue and glucose homeostasis in a sex-specific manner. Contributes to pulmonary vascular remodeling by accelerating proliferation of pulmonary arterial smooth muscle cells. In the mitochondria, together with PHB2, forms large ring complexes (prohibitin complexes) in the inner mitochondrial membrane (IMM) and functions as a chaperone protein that stabilizes mitochondrial respiratory enzymes and maintains mitochondrial integrity in the IMM, which is required for mitochondrial morphogenesis, neuronal survival, and normal lifespan. The prohibitin complex, with DNAJC19, regulates cardiolipin remodeling and the protein turnover of OMA1 in a cardiolipin-binding manner. Regulates mitochondrial respiration activity playing a role in cellular aging. The prohibitin complex plays a role of mitophagy receptor involved in targeting mitochondria for autophagic degradation. Involved in mitochondrial-mediated antiviral innate immunity, activates RIG-I-mediated signal transduction and production of IFNB1 and proinflammatory cytokine IL6. Functionally, in the nucleus, acts as a transcription coregulator, enhances promoter binding by TP53, a transcription factor it activates, but reduces the promoter binding by E2F1, a transcription factor it represses. Interacts with STAT3 to affect IL17 secretion in T-helper Th17 cells. Its function is as follows. In the plasma membrane, cooperates with CD86 to mediate CD86-signaling in B lymphocytes that regulates the level of IgG1 produced through the activation of distal signaling intermediates. Upon CD40 engagement, required to activate NF-kappa-B signaling pathway via phospholipase C and protein kinase C activation. The polypeptide is Prohibitin 1 (PHB1) (Bos taurus (Bovine)).